Consider the following 148-residue polypeptide: MKVLVILGLVLLSVMVQGKVFERCELARTLKRLGMDGYRGISLANWMCLAKWESDYNTRATNYNPGDQSTDYGIFQINSHYWCNNGRTPGAVNACHISCNALLQDDITQAVACAKRVVRDPQGIRAWVAWKAHCQNRDVSQYVQGCGV.

A signal peptide spans 1–18 (MKVLVILGLVLLSVMVQG). One can recognise a C-type lysozyme domain in the interval 19–148 (KVFERCELAR…VSQYVQGCGV (130 aa)). 4 cysteine pairs are disulfide-bonded: cysteine 24–cysteine 146, cysteine 48–cysteine 134, cysteine 83–cysteine 99, and cysteine 95–cysteine 113. Residues glutamate 53 and aspartate 71 contribute to the active site.

This sequence belongs to the glycosyl hydrolase 22 family. Monomer.

Its subcellular location is the secreted. The catalysed reaction is Hydrolysis of (1-&gt;4)-beta-linkages between N-acetylmuramic acid and N-acetyl-D-glucosamine residues in a peptidoglycan and between N-acetyl-D-glucosamine residues in chitodextrins.. Functionally, lysozymes have primarily a bacteriolytic function; those in tissues and body fluids are associated with the monocyte-macrophage system and enhance the activity of immunoagents. This is Lysozyme C (LYZ) from Saimiri sciureus (Common squirrel monkey).